We begin with the raw amino-acid sequence, 219 residues long: Octanoyltransferase (219 aa).

The 176-residue stretch at 32-207 folds into the BPL/LPL catalytic domain; that stretch reads SSSPDQLWIV…TFSHNLGYQN (176 aa). Substrate-binding positions include 71-78, 138-140, and 151-153; these read RGGQVTYH, SLG, and GLA. Cys-169 serves as the catalytic Acyl-thioester intermediate.

This sequence belongs to the LipB family.

The protein localises to the cytoplasm. The catalysed reaction is octanoyl-[ACP] + L-lysyl-[protein] = N(6)-octanoyl-L-lysyl-[protein] + holo-[ACP] + H(+). It functions in the pathway protein modification; protein lipoylation via endogenous pathway; protein N(6)-(lipoyl)lysine from octanoyl-[acyl-carrier-protein]: step 1/2. Catalyzes the transfer of endogenously produced octanoic acid from octanoyl-acyl-carrier-protein onto the lipoyl domains of lipoate-dependent enzymes. Lipoyl-ACP can also act as a substrate although octanoyl-ACP is likely to be the physiological substrate. This is Octanoyltransferase from Shewanella woodyi (strain ATCC 51908 / MS32).